The primary structure comprises 668 residues: Eukaryotic translation initiation factor 3 subunit L (668 aa).

A compositionally biased stretch (polar residues) spans 1 to 17 (MVADASQQGQSNGAAFN). The interval 1 to 42 (MVADASQQGQSNGAAFNQQQQYQQQQQRQLFGGEEEFGDEEE) is disordered. The segment covering 18–32 (QQQQYQQQQQRQLFG) has biased composition (low complexity). Acidic residues predominate over residues 33 to 42 (GEEEFGDEEE). The PCI domain occupies 358–552 (SFTHILVFIM…QVVNTSDLDF (195 aa)). The interval 625–668 (AGVKAGPPAFSQRSGGAGRSSVNKSAPAPAGAWGSSKPQPSVTA) is disordered. Positions 648-662 (KSAPAPAGAWGSSKP) are enriched in low complexity.

This sequence belongs to the eIF-3 subunit L family. In terms of assembly, component of the eukaryotic translation initiation factor 3 (eIF-3) complex.

It localises to the cytoplasm. Component of the eukaryotic translation initiation factor 3 (eIF-3) complex, which is involved in protein synthesis of a specialized repertoire of mRNAs and, together with other initiation factors, stimulates binding of mRNA and methionyl-tRNAi to the 40S ribosome. The eIF-3 complex specifically targets and initiates translation of a subset of mRNAs involved in cell proliferation. The protein is Eukaryotic translation initiation factor 3 subunit L of Mycosarcoma maydis (Corn smut fungus).